The following is a 208-amino-acid chain: Uracil phosphoribosyltransferase (208 aa).

Residues R78, R103, and 130–138 (DPMLATGGS) each bind 5-phospho-alpha-D-ribose 1-diphosphate. Uracil is bound by residues I193 and 198–200 (GDA). D199 provides a ligand contact to 5-phospho-alpha-D-ribose 1-diphosphate.

The protein belongs to the UPRTase family. Requires Mg(2+) as cofactor.

It catalyses the reaction UMP + diphosphate = 5-phospho-alpha-D-ribose 1-diphosphate + uracil. It functions in the pathway pyrimidine metabolism; UMP biosynthesis via salvage pathway; UMP from uracil: step 1/1. Allosterically activated by GTP. In terms of biological role, catalyzes the conversion of uracil and 5-phospho-alpha-D-ribose 1-diphosphate (PRPP) to UMP and diphosphate. The polypeptide is Uracil phosphoribosyltransferase (Pasteurella multocida (strain Pm70)).